We begin with the raw amino-acid sequence, 524 residues long: Chromosomal replication initiator protein DnaA (524 aa).

The segment at 1–73 (MELPESAWEQ…DELLSSADHH (73 aa)) is domain I, interacts with DnaA modulators. Residues 73 to 187 (HPITSVEISV…DVEGGLQHKS (115 aa)) are domain II. Polar residues-rich tracts occupy residues 86-95 (RSTSFETNQG), 106-126 (APRQ…QPQQ), and 153-165 (NGYN…QPYN). Residues 86 to 173 (RSTSFETNQG…YNDNPMGQGK (88 aa)) form a disordered region. Residues 188 to 404 (NLNPTFIFDN…GALKRVIANA (217 aa)) are domain III, AAA+ region. ATP is bound by residues G232, G234, K235, and T236. Positions 405-524 (HFTGRDISVE…VKNLLRTLTT (120 aa)) are domain IV, binds dsDNA.

It belongs to the DnaA family. In terms of assembly, oligomerizes as a right-handed, spiral filament on DNA at oriC.

It localises to the cytoplasm. Its function is as follows. Plays an essential role in the initiation and regulation of chromosomal replication. ATP-DnaA binds to the origin of replication (oriC) to initiate formation of the DNA replication initiation complex once per cell cycle. Binds the DnaA box (a 9 base pair repeat at the origin) and separates the double-stranded (ds)DNA. Forms a right-handed helical filament on oriC DNA; dsDNA binds to the exterior of the filament while single-stranded (ss)DNA is stabiized in the filament's interior. The ATP-DnaA-oriC complex binds and stabilizes one strand of the AT-rich DNA unwinding element (DUE), permitting loading of DNA polymerase. After initiation quickly degrades to an ADP-DnaA complex that is not apt for DNA replication. Binds acidic phospholipids. The sequence is that of Chromosomal replication initiator protein DnaA from Saccharophagus degradans (strain 2-40 / ATCC 43961 / DSM 17024).